Consider the following 229-residue polypeptide: Potassium/proton antiporter CemA (229 aa).

4 helical membrane-spanning segments follow: residues 7–27 (FTPL…SLSL), 114–134 (IICF…LLIL), 154–174 (ILLL…ELMI), and 189–209 (IISG…KYWI).

This sequence belongs to the CemA family.

It localises to the plastid. The protein resides in the chloroplast inner membrane. The catalysed reaction is K(+)(in) + H(+)(out) = K(+)(out) + H(+)(in). In terms of biological role, contributes to K(+)/H(+) antiport activity by supporting proton efflux to control proton extrusion and homeostasis in chloroplasts in a light-dependent manner to modulate photosynthesis. Prevents excessive induction of non-photochemical quenching (NPQ) under continuous-light conditions. Indirectly promotes efficient inorganic carbon uptake into chloroplasts. This Vitis vinifera (Grape) protein is Potassium/proton antiporter CemA.